The sequence spans 498 residues: Lysine--tRNA ligase (498 aa).

Mg(2+) is bound by residues glutamate 407 and glutamate 414.

This sequence belongs to the class-II aminoacyl-tRNA synthetase family. Homodimer. Mg(2+) serves as cofactor.

It localises to the cytoplasm. The catalysed reaction is tRNA(Lys) + L-lysine + ATP = L-lysyl-tRNA(Lys) + AMP + diphosphate. The polypeptide is Lysine--tRNA ligase (lysS) (Rhizobium meliloti (strain 1021) (Ensifer meliloti)).